A 262-amino-acid chain; its full sequence is MDKRWSLQGMNALVTGGTKGIGEAVVEELSILGARVHTCARDETQLQERLREWQEKGFQVTTSICDVSLREQREKLMETVSSLFQGKLNILVNNVGTLMLKPTTEYTAEEFSFLMATNLDSAFHISQLAHPLLKASGSGSIVLMSSIAGVVHVGVGSIYGATKGAMNQLARNLACEWASDNIRTNAICPWLITTPLISDLLSVEEMKKEAEERTPMGRVGEANEVSPLVAFLCLPAASYITGQVICVDGGLTVNGFSYQPHA.

An NADP(+)-binding site is contributed by 13-37; that stretch reads LVTGGTKGIGEAVVEELSILGARVH. Serine 146 is a binding site for substrate. Residue tyrosine 159 is the Proton acceptor of the active site.

It belongs to the short-chain dehydrogenases/reductases (SDR) family. SDR65C subfamily.

The chain is Tropinone reductase homolog At2g29290 from Arabidopsis thaliana (Mouse-ear cress).